Consider the following 305-residue polypeptide: Heat stress transcription factor B-4d (305 aa).

Positions leucine 201–valine 230 are hydrophobic repeat HR-A/B. Residues lysine 286–arginine 289 carry the Nuclear localization signal motif. A disordered region spans residues lysine 286–glycine 305. A compositionally biased stretch (acidic residues) spans glutamine 294–glycine 305.

The protein belongs to the HSF family. Class B subfamily. Homotrimer. Post-translationally, exhibits temperature-dependent phosphorylation.

It localises to the nucleus. Its function is as follows. Transcriptional regulator that specifically binds DNA of heat shock promoter elements (HSE). The polypeptide is Heat stress transcription factor B-4d (HSFB4D) (Oryza sativa subsp. japonica (Rice)).